The sequence spans 156 residues: Glutamine--fructose-6-phosphate aminotransferase [isomerizing] (156 aa).

The SIS domain occupies 4-146; sequence MAHHIVPARD…VLKGTDVDQP (143 aa). K151 serves as the catalytic For Fru-6P isomerization activity.

Homodimer.

Its subcellular location is the cytoplasm. It carries out the reaction D-fructose 6-phosphate + L-glutamine = D-glucosamine 6-phosphate + L-glutamate. Functionally, catalyzes the first step in hexosamine metabolism, converting fructose-6P into glucosamine-6P using glutamine as a nitrogen source. This is Glutamine--fructose-6-phosphate aminotransferase [isomerizing] (glmS) from Sphingobium yanoikuyae (Sphingomonas yanoikuyae).